We begin with the raw amino-acid sequence, 310 residues long: Acetylglutamate kinase (310 aa).

Substrate is bound by residues G74–G75, R96, and N201.

Belongs to the acetylglutamate kinase family. ArgB subfamily.

Its subcellular location is the cytoplasm. The enzyme catalyses N-acetyl-L-glutamate + ATP = N-acetyl-L-glutamyl 5-phosphate + ADP. It functions in the pathway amino-acid biosynthesis; L-arginine biosynthesis; N(2)-acetyl-L-ornithine from L-glutamate: step 2/4. Catalyzes the ATP-dependent phosphorylation of N-acetyl-L-glutamate. This chain is Acetylglutamate kinase, found in Arthrobacter sp. (strain FB24).